The primary structure comprises 465 residues: MSFIRLHKDAAATWLSRLLPAAIFILVGLFSIMVIRDYGRESAAARQTLLEKGNVLIRALESGTRVGMGMRMHHAQQQTLLEEMAGQPGVLWFAVTDAQGVIITHSNPGMVGKSLYSPSEMHQLNPGPQERWRRVDVAANGETVPALEIYRQFQPLFGMRGHGMRGHGMARSANDDEPAKQTIFIAFDASELAATQAREWRNTLIVLSALAAVLLATLLAFFWHQRYQRSHRELLDAMKRKEKLVAMGHLAAGVAHEIRNPLSSIKGLAKYFAERTPAGGESHELAQVMAKEADRLNRVVSELLELVKPAHLTLQTVNLNDIITHSLNLVSQDAQSREIQLRFTANETLKRIQADPDRLTQVLLNLYLNAIHAIGRQGTISVEAKESGTDRVIITVTDSGKGIAPDQLEAIFTPYFTTKADGTGLGLAVVQNIIEQHGGAIKVKSIEGKGAVFTIWLPVIARQQD.

At 1–14 (MSFIRLHKDAAATW) the chain is on the cytoplasmic side. A helical membrane pass occupies residues 15–35 (LSRLLPAAIFILVGLFSIMVI). The Periplasmic segment spans residues 36-202 (RDYGRESAAA…AATQAREWRN (167 aa)). Residues 203–223 (TLIVLSALAAVLLATLLAFFW) form a helical membrane-spanning segment. The Cytoplasmic portion of the chain corresponds to 224-465 (HQRYQRSHRE…WLPVIARQQD (242 aa)). A Histidine kinase domain is found at 253-461 (GVAHEIRNPL…VFTIWLPVIA (209 aa)). His256 bears the Phosphohistidine; by autocatalysis mark.

In terms of processing, autophosphorylated.

It is found in the cell inner membrane. The enzyme catalyses ATP + protein L-histidine = ADP + protein N-phospho-L-histidine.. With respect to regulation, activity of the ZraS/ZraR two-component system is repressed by the zinc-bound form of ZraP, which probably interacts with the periplasmic region of ZraS. Functionally, part of the Zra signaling pathway, an envelope stress response (ESR) system composed of the periplasmic accessory protein ZraP, the histidine kinase ZraS and the transcriptional regulator ZraR. The ZraPSR system contributes to antibiotic resistance and is important for membrane integrity in the presence of membrane-targeting biocides. ZraS is a member of the two-component regulatory system ZraS/ZraR. Functions as a membrane-associated sensor kinase that phosphorylates ZraR in response to high concentrations of Zn(2+) or Pb(2+) in the medium. The polypeptide is Sensor histidine kinase ZraS (Salmonella typhimurium (strain LT2 / SGSC1412 / ATCC 700720)).